A 275-amino-acid polypeptide reads, in one-letter code: Methylthioribulose-1-phosphate dehydratase (275 aa).

Cys125 is a substrate binding site. Zn(2+) is bound by residues His143 and His145. Glu168 functions as the Proton donor/acceptor in the catalytic mechanism. His233 is a binding site for Zn(2+).

The protein belongs to the aldolase class II family. MtnB subfamily. Requires Zn(2+) as cofactor.

Its subcellular location is the cytoplasm. The catalysed reaction is 5-(methylsulfanyl)-D-ribulose 1-phosphate = 5-methylsulfanyl-2,3-dioxopentyl phosphate + H2O. Its pathway is amino-acid biosynthesis; L-methionine biosynthesis via salvage pathway; L-methionine from S-methyl-5-thio-alpha-D-ribose 1-phosphate: step 2/6. In terms of biological role, catalyzes the dehydration of methylthioribulose-1-phosphate (MTRu-1-P) into 2,3-diketo-5-methylthiopentyl-1-phosphate (DK-MTP-1-P). The protein is Methylthioribulose-1-phosphate dehydratase of Lodderomyces elongisporus (strain ATCC 11503 / CBS 2605 / JCM 1781 / NBRC 1676 / NRRL YB-4239) (Yeast).